Here is a 154-residue protein sequence, read N- to C-terminus: Myoglobin (154 aa).

The Globin domain maps to Gly-2–Lys-148. Ser-4 bears the Phosphoserine mark. Residue His-65 participates in nitrite binding. His-65 is an O2 binding site. Residue Thr-68 is modified to Phosphothreonine. Residue His-94 participates in heme b binding.

Belongs to the globin family. In terms of assembly, monomeric.

Its subcellular location is the cytoplasm. It localises to the sarcoplasm. It carries out the reaction Fe(III)-heme b-[protein] + nitric oxide + H2O = Fe(II)-heme b-[protein] + nitrite + 2 H(+). It catalyses the reaction H2O2 + AH2 = A + 2 H2O. Monomeric heme protein which primary function is to store oxygen and facilitate its diffusion within muscle tissues. Reversibly binds oxygen through a pentacoordinated heme iron and enables its timely and efficient release as needed during periods of heightened demand. Depending on the oxidative conditions of tissues and cells, and in addition to its ability to bind oxygen, it also has a nitrite reductase activity whereby it regulates the production of bioactive nitric oxide. Under stress conditions, like hypoxia and anoxia, it also protects cells against reactive oxygen species thanks to its pseudoperoxidase activity. This chain is Myoglobin (MB), found in Sus scrofa (Pig).